The following is a 119-amino-acid chain: DNA-binding protein MMP0157 (119 aa).

Basic and acidic residues predominate over residues 1-12 (MNPEEIRQRRLQ). The interval 1-35 (MNPEEIRQRRLQEMQAKAQAQGAANDPEAQRQMQE) is disordered.

This sequence belongs to the PDCD5 family.

This Methanococcus maripaludis (strain DSM 14266 / JCM 13030 / NBRC 101832 / S2 / LL) protein is DNA-binding protein MMP0157.